A 191-amino-acid polypeptide reads, in one-letter code: Protein GrpE (191 aa).

Basic and acidic residues predominate over residues 1 to 10 (MNHEEQKVEA). The disordered stretch occupies residues 1–28 (MNHEEQKVEAMEQVEAQPVEPTDVDSEV).

This sequence belongs to the GrpE family. As to quaternary structure, homodimer.

The protein localises to the cytoplasm. Participates actively in the response to hyperosmotic and heat shock by preventing the aggregation of stress-denatured proteins, in association with DnaK and GrpE. It is the nucleotide exchange factor for DnaK and may function as a thermosensor. Unfolded proteins bind initially to DnaJ; upon interaction with the DnaJ-bound protein, DnaK hydrolyzes its bound ATP, resulting in the formation of a stable complex. GrpE releases ADP from DnaK; ATP binding to DnaK triggers the release of the substrate protein, thus completing the reaction cycle. Several rounds of ATP-dependent interactions between DnaJ, DnaK and GrpE are required for fully efficient folding. This chain is Protein GrpE, found in Aeromonas hydrophila subsp. hydrophila (strain ATCC 7966 / DSM 30187 / BCRC 13018 / CCUG 14551 / JCM 1027 / KCTC 2358 / NCIMB 9240 / NCTC 8049).